The primary structure comprises 316 residues: Leucine-rich repeat-containing protein 73 (316 aa).

LRR repeat units lie at residues Ser57 to Ala78, Ser86 to Asn106, Ala114 to Leu137, Gly145 to Ala166, Gln174 to Asp187, Thr202 to Asp223, and Ala231 to Ile250. A disordered region spans residues Gly257–Asn296. The span at Glu272–Ala281 shows a compositional bias: basic and acidic residues.

The protein is Leucine-rich repeat-containing protein 73 (Lrrc73) of Rattus norvegicus (Rat).